The primary structure comprises 89 residues: Small ribosomal subunit protein uS14 (89 aa).

Residues 32-51 form a disordered region; that stretch reads DYEGLQKLPKNSSPVRLHNR.

The protein belongs to the universal ribosomal protein uS14 family. In terms of assembly, part of the 30S ribosomal subunit. Contacts proteins S3 and S10.

Its function is as follows. Binds 16S rRNA, required for the assembly of 30S particles and may also be responsible for determining the conformation of the 16S rRNA at the A site. The sequence is that of Small ribosomal subunit protein uS14 from Christiangramia forsetii (strain DSM 17595 / CGMCC 1.15422 / KT0803) (Gramella forsetii).